Consider the following 122-residue polypeptide: Cofilin-5 (122 aa).

The region spanning 3–122 (SRIIEIDPNC…VKDLIQLSNL (120 aa)) is the ADF-H domain.

It belongs to the actin-binding proteins ADF family.

It is found in the cytoplasm. Its subcellular location is the cytoskeleton. Functionally, controls actin polymerization and depolymerization. This is Cofilin-5 (cofF) from Dictyostelium discoideum (Social amoeba).